Consider the following 175-residue polypeptide: Translation initiation factor IF-3 (175 aa).

Belongs to the IF-3 family. As to quaternary structure, monomer.

The protein resides in the cytoplasm. In terms of biological role, IF-3 binds to the 30S ribosomal subunit and shifts the equilibrium between 70S ribosomes and their 50S and 30S subunits in favor of the free subunits, thus enhancing the availability of 30S subunits on which protein synthesis initiation begins. This Chlamydia trachomatis serovar D (strain ATCC VR-885 / DSM 19411 / UW-3/Cx) protein is Translation initiation factor IF-3.